Here is a 315-residue protein sequence, read N- to C-terminus: Energy-coupling factor transporter ATP-binding protein EcfA2 (315 aa).

The 245-residue stretch at 31–275 (IILDNVSYTY…QELLSKIQIE (245 aa)) folds into the ABC transporter domain. Residue 68–75 (GTTGSGKS) participates in ATP binding.

The protein belongs to the ABC transporter superfamily. Energy-coupling factor EcfA family. In terms of assembly, forms a stable energy-coupling factor (ECF) transporter complex composed of 2 membrane-embedded substrate-binding proteins (S component), 2 ATP-binding proteins (A component) and 2 transmembrane proteins (T component).

The protein localises to the cell membrane. Its function is as follows. ATP-binding (A) component of a common energy-coupling factor (ECF) ABC-transporter complex. Unlike classic ABC transporters this ECF transporter provides the energy necessary to transport a number of different substrates. This is Energy-coupling factor transporter ATP-binding protein EcfA2 from Mesoplasma florum (strain ATCC 33453 / NBRC 100688 / NCTC 11704 / L1) (Acholeplasma florum).